A 194-amino-acid polypeptide reads, in one-letter code: Imidazoleglycerol-phosphate dehydratase (194 aa).

Belongs to the imidazoleglycerol-phosphate dehydratase family.

Its subcellular location is the cytoplasm. It catalyses the reaction D-erythro-1-(imidazol-4-yl)glycerol 3-phosphate = 3-(imidazol-4-yl)-2-oxopropyl phosphate + H2O. Its pathway is amino-acid biosynthesis; L-histidine biosynthesis; L-histidine from 5-phospho-alpha-D-ribose 1-diphosphate: step 6/9. This chain is Imidazoleglycerol-phosphate dehydratase, found in Bacillus anthracis (strain A0248).